The following is a 212-amino-acid chain: Noggin-2 (212 aa).

The N-terminal stretch at 1 to 23 is a signal peptide; that stretch reads MGSITRALPLLLLLLLCAHGTAS. Residues 37 to 56 are disordered; sequence LPVPDLIENPDPEHDPREQD. A compositionally biased stretch (basic and acidic residues) spans 47-56; that stretch reads DPEHDPREQD. Asn84 carries an N-linked (GlcNAc...) asparagine glycan.

It belongs to the noggin family. Homodimer; disulfide-linked.

Its subcellular location is the secreted. In terms of biological role, inhibitor of bone morphogenetic proteins (BMP) signaling. The chain is Noggin-2 (nog2) from Danio rerio (Zebrafish).